We begin with the raw amino-acid sequence, 160 residues long: Cytochrome b6-f complex subunit 4 (160 aa).

The next 3 helical transmembrane spans lie at 36–56, 95–115, and 131–151; these read LLYI…GLAV, LLGV…PFLE, and TVFL…ALPI.

The protein belongs to the cytochrome b family. PetD subfamily. As to quaternary structure, the 4 large subunits of the cytochrome b6-f complex are cytochrome b6, subunit IV (17 kDa polypeptide, petD), cytochrome f and the Rieske protein, while the 4 small subunits are petG, petL, petM and petN. The complex functions as a dimer.

The protein resides in the plastid. It is found in the chloroplast thylakoid membrane. Component of the cytochrome b6-f complex, which mediates electron transfer between photosystem II (PSII) and photosystem I (PSI), cyclic electron flow around PSI, and state transitions. This Marchantia polymorpha (Common liverwort) protein is Cytochrome b6-f complex subunit 4.